Here is a 102-residue protein sequence, read N- to C-terminus: CRISPR-associated endoribonuclease Cas2 (102 aa).

Asp8 is a binding site for Mg(2+).

The protein belongs to the CRISPR-associated endoribonuclease Cas2 protein family. As to quaternary structure, homodimer, forms a heterotetramer with a Cas1 homodimer. Mg(2+) serves as cofactor.

In terms of biological role, CRISPR (clustered regularly interspaced short palindromic repeat), is an adaptive immune system that provides protection against mobile genetic elements (viruses, transposable elements and conjugative plasmids). CRISPR clusters contain sequences complementary to antecedent mobile elements and target invading nucleic acids. CRISPR clusters are transcribed and processed into CRISPR RNA (crRNA). Functions as a ssRNA-specific endoribonuclease. Involved in the integration of spacer DNA into the CRISPR cassette. The polypeptide is CRISPR-associated endoribonuclease Cas2 (Acidovorax ebreus (strain TPSY) (Diaphorobacter sp. (strain TPSY))).